The following is a 213-amino-acid chain: MDLTDTQQAILALIAERIDADGVPPSQTEIARAFGFKGIRAAQYHLEALEHAGAIRRVPGQARGIRLAGQGAQTRTAPVSEVARDDVLRLPVLGRVAAGLPIGADIGSDDFVVLDRVFFSPSPDYLLKVQGDSMRDEGIFNGDLIGVHRTRDARSGQIVVARIDEEITVKLLKIGKDRIRLLPRNPDYAPIEVLPDQDFAIEGLYCGLLRPNR.

The H-T-H motif DNA-binding region spans 27 to 47 (QTEIARAFGFKGIRAAQYHLE). Residues Ser133 and Lys170 each act as for autocatalytic cleavage activity in the active site.

Belongs to the peptidase S24 family. As to quaternary structure, homodimer.

The enzyme catalyses Hydrolysis of Ala-|-Gly bond in repressor LexA.. In terms of biological role, represses a number of genes involved in the response to DNA damage (SOS response), including recA and lexA. Has been shown to bind to the palindromic sequence 5'-CTG-N(8-12)-C-[TC]-G. In the presence of single-stranded DNA, RecA interacts with LexA causing an autocatalytic cleavage which disrupts the DNA-binding part of LexA, leading to derepression of the SOS regulon and eventually DNA repair. The protein is LexA repressor of Xanthomonas citri (Xanthomonas campestris pv. citri).